The sequence spans 389 residues: 3-ketoacyl-CoA thiolase (389 aa).

Cys91 (acyl-thioester intermediate) is an active-site residue. Catalysis depends on proton acceptor residues His343 and Cys373.

Belongs to the thiolase-like superfamily. Thiolase family. As to quaternary structure, heterotetramer of two alpha chains (FadB) and two beta chains (FadA).

It localises to the cytoplasm. It carries out the reaction an acyl-CoA + acetyl-CoA = a 3-oxoacyl-CoA + CoA. The protein operates within lipid metabolism; fatty acid beta-oxidation. Its function is as follows. Catalyzes the final step of fatty acid oxidation in which acetyl-CoA is released and the CoA ester of a fatty acid two carbons shorter is formed. The chain is 3-ketoacyl-CoA thiolase from Citrobacter koseri (strain ATCC BAA-895 / CDC 4225-83 / SGSC4696).